The sequence spans 121 residues: Large ribosomal subunit protein bL12 (121 aa).

Belongs to the bacterial ribosomal protein bL12 family. As to quaternary structure, homodimer. Part of the ribosomal stalk of the 50S ribosomal subunit. Forms a multimeric L10(L12)X complex, where L10 forms an elongated spine to which 2 to 4 L12 dimers bind in a sequential fashion. Binds GTP-bound translation factors.

Functionally, forms part of the ribosomal stalk which helps the ribosome interact with GTP-bound translation factors. Is thus essential for accurate translation. The sequence is that of Large ribosomal subunit protein bL12 from Escherichia coli O45:K1 (strain S88 / ExPEC).